The following is a 520-amino-acid chain: Vacuolar protein sorting-associated protein 9A (520 aa).

Positions 102–246 constitute a VPS9 domain; the sequence is VIADEKLFQK…ISNIDAKSIS (145 aa). GTP contacts are provided by Asn180 and Asp185. Disordered stretches follow at residues 267–331, 396–433, and 464–520; these read DSQT…AESI, LAPS…ETDR, and LVEG…EASE. Residues 287–323 show a composition bias toward polar residues; that stretch reads LQKTQSLNPKRENTLFQSKSSDSLSGTNELLNINSET. Residue Ser330 is modified to Phosphoserine. The span at 396–407 shows a compositional bias: low complexity; sequence LAPSSSPLQASS. Basic and acidic residues-rich tracts occupy residues 413–433 and 464–497; these read KESE…ETDR and LVEG…REGD.

In terms of assembly, homodimer. The homodimer interacts with RABF2B. Interacts with RABF1 and RABF2A. Widely expressed.

Functions as a guanine nucleotide exchange factor (GEF) for Rab small GTPases. Activates specifically RABF1, RABF2A and RABF2B proteins. Required for early stages of embryogenesis, cytokinesis, embryogenesis, and organ development. Is essential for the establishment or maintenance of the polar localization of the auxin efflux carrier PIN1. This chain is Vacuolar protein sorting-associated protein 9A, found in Arabidopsis thaliana (Mouse-ear cress).